Reading from the N-terminus, the 337-residue chain is Glyceraldehyde-3-phosphate dehydrogenase (337 aa).

Residues Arg-12–Ile-13, Asp-34, and Lys-79 contribute to the NAD(+) site. D-glyceraldehyde 3-phosphate contacts are provided by residues Ser-150 to Thr-152, Thr-181, Thr-210 to Gly-211, and Arg-233. Catalysis depends on Cys-151, which acts as the Nucleophile. Asn-315 contacts NAD(+).

It belongs to the glyceraldehyde-3-phosphate dehydrogenase family. In terms of assembly, homotetramer.

Its subcellular location is the cytoplasm. The enzyme catalyses D-glyceraldehyde 3-phosphate + phosphate + NAD(+) = (2R)-3-phospho-glyceroyl phosphate + NADH + H(+). It participates in carbohydrate degradation; glycolysis; pyruvate from D-glyceraldehyde 3-phosphate: step 1/5. The sequence is that of Glyceraldehyde-3-phosphate dehydrogenase (GPD1) from Cochliobolus heterostrophus (Southern corn leaf blight fungus).